The chain runs to 458 residues: Cysteine--tRNA ligase (458 aa).

Cys-28 lines the Zn(2+) pocket. Positions 30–40 (VTVYDLCHFGH) match the 'HIGH' region motif. Zn(2+)-binding residues include Cys-209, His-234, and Glu-238. The 'KMSKS' region signature appears at 266–270 (KMSKS). Lys-269 serves as a coordination point for ATP.

Belongs to the class-I aminoacyl-tRNA synthetase family. In terms of assembly, monomer. It depends on Zn(2+) as a cofactor.

The protein localises to the cytoplasm. It carries out the reaction tRNA(Cys) + L-cysteine + ATP = L-cysteinyl-tRNA(Cys) + AMP + diphosphate. This is Cysteine--tRNA ligase from Mannheimia succiniciproducens (strain KCTC 0769BP / MBEL55E).